The following is a 149-amino-acid chain: Deoxyuridine 5'-triphosphate nucleotidohydrolase (149 aa).

Substrate contacts are provided by residues 68 to 70 (RSG), N81, 85 to 87 (LID), and M95.

This sequence belongs to the dUTPase family. Requires Mg(2+) as cofactor.

It carries out the reaction dUTP + H2O = dUMP + diphosphate + H(+). It participates in pyrimidine metabolism; dUMP biosynthesis; dUMP from dCTP (dUTP route): step 2/2. This enzyme is involved in nucleotide metabolism: it produces dUMP, the immediate precursor of thymidine nucleotides and it decreases the intracellular concentration of dUTP so that uracil cannot be incorporated into DNA. In Bordetella pertussis (strain Tohama I / ATCC BAA-589 / NCTC 13251), this protein is Deoxyuridine 5'-triphosphate nucleotidohydrolase.